The primary structure comprises 172 residues: MLPMITGFMNYGQQTLRAARYIGQGFMITLSHTNRLPVTIQYPYEKLITSERFRGRIHFEFDKCIACEVCVRVCPIDLPVVDWKLETNIRKKRLLNYSIDFGICIFCGNCVEYCPTNCLSMTEEYEFSTYDRHELNYNQIALGRLPMSVIDDYTIRTILNSPQTKNGENPLI.

2 consecutive 4Fe-4S ferredoxin-type domains span residues 55–84 (GRIH…VDWK) and 95–124 (LNYS…MTEE). Residues C64, C67, C70, C74, C104, C107, C110, and C114 each contribute to the [4Fe-4S] cluster site.

Belongs to the complex I 23 kDa subunit family. In terms of assembly, NDH is composed of at least 16 different subunits, 5 of which are encoded in the nucleus. Requires [4Fe-4S] cluster as cofactor.

It is found in the plastid. The protein resides in the chloroplast thylakoid membrane. It carries out the reaction a plastoquinone + NADH + (n+1) H(+)(in) = a plastoquinol + NAD(+) + n H(+)(out). The catalysed reaction is a plastoquinone + NADPH + (n+1) H(+)(in) = a plastoquinol + NADP(+) + n H(+)(out). Functionally, NDH shuttles electrons from NAD(P)H:plastoquinone, via FMN and iron-sulfur (Fe-S) centers, to quinones in the photosynthetic chain and possibly in a chloroplast respiratory chain. The immediate electron acceptor for the enzyme in this species is believed to be plastoquinone. Couples the redox reaction to proton translocation, and thus conserves the redox energy in a proton gradient. In Crucihimalaya wallichii (Rock-cress), this protein is NAD(P)H-quinone oxidoreductase subunit I, chloroplastic.